Consider the following 156-residue polypeptide: Small ribosomal subunit protein uS7 (156 aa).

The protein belongs to the universal ribosomal protein uS7 family. Part of the 30S ribosomal subunit. Contacts proteins S9 and S11.

Its function is as follows. One of the primary rRNA binding proteins, it binds directly to 16S rRNA where it nucleates assembly of the head domain of the 30S subunit. Is located at the subunit interface close to the decoding center, probably blocks exit of the E-site tRNA. This Nostoc punctiforme (strain ATCC 29133 / PCC 73102) protein is Small ribosomal subunit protein uS7.